Here is a 235-residue protein sequence, read N- to C-terminus: Elongation factor Tu (235 aa).

The tr-type G domain occupies 1–125 (KNMITGAAQM…EVDEYIPTPE (125 aa)). A GTP-binding site is contributed by 47–50 (NKED).

The protein belongs to the TRAFAC class translation factor GTPase superfamily. Classic translation factor GTPase family. EF-Tu/EF-1A subfamily. In terms of assembly, monomer.

It localises to the cytoplasm. The enzyme catalyses GTP + H2O = GDP + phosphate + H(+). GTP hydrolase that promotes the GTP-dependent binding of aminoacyl-tRNA to the A-site of ribosomes during protein biosynthesis. In Gloeothece membranacea (strain PCC 6501 / SAG 26.84), this protein is Elongation factor Tu (tufA).